Here is an 87-residue protein sequence, read N- to C-terminus: Phosphocarrier protein HPr (87 aa).

One can recognise an HPr domain in the interval 2-87 (ASKDFHIVAE…NETMTKEGLA (86 aa)). Residue His-15 is the Pros-phosphohistidine intermediate of the active site. Ser-46 bears the Phosphoserine; by HPrK/P mark.

The protein belongs to the HPr family.

It is found in the cytoplasm. With respect to regulation, phosphorylation on Ser-46 inhibits the phosphoryl transfer from enzyme I to HPr. Its function is as follows. General (non sugar-specific) component of the phosphoenolpyruvate-dependent sugar phosphotransferase system (sugar PTS). This major carbohydrate active-transport system catalyzes the phosphorylation of incoming sugar substrates concomitantly with their translocation across the cell membrane. The phosphoryl group from phosphoenolpyruvate (PEP) is transferred to the phosphoryl carrier protein HPr by enzyme I. Phospho-HPr then transfers it to the PTS EIIA domain. P-Ser-HPr interacts with the catabolite control protein A (CcpA), forming a complex that binds to DNA at the catabolite response elements cre, operator sites preceding a large number of catabolite-regulated genes. Thus, P-Ser-HPr is a corepressor in carbon catabolite repression (CCR), a mechanism that allows bacteria to coordinate and optimize the utilization of available carbon sources. P-Ser-HPr also plays a role in inducer exclusion, in which it probably interacts with several non-PTS permeases and inhibits their transport activity. This is Phosphocarrier protein HPr (ptsH) from Streptococcus mutans serotype c (strain ATCC 700610 / UA159).